We begin with the raw amino-acid sequence, 616 residues long: Fatty acyl-CoA reductase 2, chloroplastic (616 aa).

A chloroplast-targeting transit peptide spans 1–14 (MEALFLSSSSSSIV). An NAD(P)H-binding motif is present at residues 133 to 143 (FLITGSTGFLA). Active-site residues include tyrosine 357 and lysine 361.

Belongs to the fatty acyl-CoA reductase family. As to expression, expressed in the tapetum of anthers.

The protein resides in the plastid. Its subcellular location is the chloroplast. The enzyme catalyses a long-chain fatty acyl-CoA + 2 NADPH + 2 H(+) = a long-chain primary fatty alcohol + 2 NADP(+) + CoA. The catalysed reaction is hexadecanoyl-CoA + 2 NADPH + 2 H(+) = hexadecan-1-ol + 2 NADP(+) + CoA. It catalyses the reaction hexadecanoyl-[ACP] + 2 NADPH + 2 H(+) = hexadecan-1-ol + holo-[ACP] + 2 NADP(+). Catalyzes the reduction of fatty acyl-CoA and -ACP (acyl carrier protein) substrates to fatty alcohols. Triggers the accumulation of C16 and C18 fatty alcohols; converts palmitoyl-acyl carrier protein to the corresponding C16:0 alcohol with NAD(P)H as electron donor, but seems inactive toward palmitoyl- or other acyl-coenzyme A. Also triggers the formation of some C16:0 aldehydes. Involved in the synthesis of the lipid component in sporopollenin. Required for exine patterning of pollen grain by mediating the formation of pollen wall substances. This Arabidopsis thaliana (Mouse-ear cress) protein is Fatty acyl-CoA reductase 2, chloroplastic.